The sequence spans 464 residues: DNA repair protein KRE29 (464 aa).

A disordered region spans residues 1-69; that stretch reads MGSVNSSPNE…SDEEFSSLEN (69 aa). Residues 53–65 show a composition bias toward acidic residues; sequence PENDSLNSDEEFS. Residues Ser-81 and Ser-101 each carry the phosphoserine modification.

As to quaternary structure, component of the Smc5-Smc6 complex which consists of KRE29, MMS21, NSE1, NSE3, NSE4, NSE5, SMC5 and SMC6. Interacts with NSE5.

It is found in the nucleus. Its subcellular location is the cytoplasm. In terms of biological role, acts in a DNA repair pathway for removal of UV-induced DNA damage that is distinct from classical nucleotide excision repair and in repair of ionizing radiation damage. Functions in homologous recombination repair of DNA double strand breaks and in recovery of stalled replication forks. In Saccharomyces cerevisiae (strain ATCC 204508 / S288c) (Baker's yeast), this protein is DNA repair protein KRE29 (KRE29).